Reading from the N-terminus, the 220-residue chain is Ribonuclease P protein subunit p29 (220 aa).

S10 is modified (phosphoserine).

This sequence belongs to the eukaryotic/archaeal RNase P protein component 1 family. Component of nuclear RNase P and RNase MRP ribonucleoproteins. RNase P consists of a catalytic RNA moiety and 10 different protein chains; POP1, POP4, POP5, POP7, RPP14, RPP21, RPP25, RPP30, RPP38 and RPP40. Within the RNase P complex, POP1, POP7 and RPP25 form the 'finger' subcomplex, POP5, RPP14, RPP40 and homodimeric RPP30 form the 'palm' subcomplex, and RPP21, POP4 and RPP38 form the 'wrist' subcomplex. All subunits of the RNase P complex interact with the catalytic RNA. Several subunits of RNase P are also part of the RNase MRP complex. RNase MRP consists of a catalytic RNA moiety and about 8 protein subunits; POP1, POP7, RPP25, RPP30, RPP38, RPP40 and possibly also POP4 and POP5.

The protein resides in the nucleus. The protein localises to the nucleolus. Its function is as follows. Component of ribonuclease P, a ribonucleoprotein complex that generates mature tRNA molecules by cleaving their 5'-ends. This Homo sapiens (Human) protein is Ribonuclease P protein subunit p29 (POP4).